The following is a 360-amino-acid chain: 3-isopropylmalate dehydrogenase (360 aa).

Residue 76–89 (GPKWDTIERDIRPE) coordinates NAD(+). Residues Arg96, Arg106, Arg134, and Asp224 each coordinate substrate. Mg(2+) is bound by residues Asp224, Asp248, and Asp252. An NAD(+)-binding site is contributed by 282–294 (GSAPDIAGQGIAN).

The protein belongs to the isocitrate and isopropylmalate dehydrogenases family. LeuB type 1 subfamily. As to quaternary structure, homodimer. The cofactor is Mg(2+). Requires Mn(2+) as cofactor.

The protein resides in the cytoplasm. The catalysed reaction is (2R,3S)-3-isopropylmalate + NAD(+) = 4-methyl-2-oxopentanoate + CO2 + NADH. It participates in amino-acid biosynthesis; L-leucine biosynthesis; L-leucine from 3-methyl-2-oxobutanoate: step 3/4. Catalyzes the oxidation of 3-carboxy-2-hydroxy-4-methylpentanoate (3-isopropylmalate) to 3-carboxy-4-methyl-2-oxopentanoate. The product decarboxylates to 4-methyl-2 oxopentanoate. The polypeptide is 3-isopropylmalate dehydrogenase (Pseudomonas syringae pv. tomato (strain ATCC BAA-871 / DC3000)).